Here is a 437-residue protein sequence, read N- to C-terminus: Serine hydroxymethyltransferase 2 (437 aa).

(6S)-5,6,7,8-tetrahydrofolate is bound by residues Leu125 and 129-131 (GHL). Lys234 bears the N6-(pyridoxal phosphate)lysine mark.

Belongs to the SHMT family. As to quaternary structure, homodimer. Pyridoxal 5'-phosphate is required as a cofactor.

Its subcellular location is the cytoplasm. The enzyme catalyses (6R)-5,10-methylene-5,6,7,8-tetrahydrofolate + glycine + H2O = (6S)-5,6,7,8-tetrahydrofolate + L-serine. Its pathway is one-carbon metabolism; tetrahydrofolate interconversion. The protein operates within amino-acid biosynthesis; glycine biosynthesis; glycine from L-serine: step 1/1. Its function is as follows. Catalyzes the reversible interconversion of serine and glycine with tetrahydrofolate (THF) serving as the one-carbon carrier. This reaction serves as the major source of one-carbon groups required for the biosynthesis of purines, thymidylate, methionine, and other important biomolecules. Also exhibits THF-independent aldolase activity toward beta-hydroxyamino acids, producing glycine and aldehydes, via a retro-aldol mechanism. This is Serine hydroxymethyltransferase 2 from Mesorhizobium japonicum (strain LMG 29417 / CECT 9101 / MAFF 303099) (Mesorhizobium loti (strain MAFF 303099)).